The primary structure comprises 502 residues: UDP-N-acetylmuramoylalanine--D-glutamate ligase (502 aa).

129-135 (GTNGKTT) is a binding site for ATP. Positions 288–307 (APDETTSRRRKRDGAHTPDI) are disordered.

It belongs to the MurCDEF family.

The protein resides in the cytoplasm. The catalysed reaction is UDP-N-acetyl-alpha-D-muramoyl-L-alanine + D-glutamate + ATP = UDP-N-acetyl-alpha-D-muramoyl-L-alanyl-D-glutamate + ADP + phosphate + H(+). It participates in cell wall biogenesis; peptidoglycan biosynthesis. In terms of biological role, cell wall formation. Catalyzes the addition of glutamate to the nucleotide precursor UDP-N-acetylmuramoyl-L-alanine (UMA). This chain is UDP-N-acetylmuramoylalanine--D-glutamate ligase, found in Burkholderia ambifaria (strain ATCC BAA-244 / DSM 16087 / CCUG 44356 / LMG 19182 / AMMD) (Burkholderia cepacia (strain AMMD)).